The sequence spans 512 residues: Differentially expressed in FDCP 8 homolog (512 aa).

Met-1 carries the N-acetylmethionine modification. The segment at 77–116 is disordered; sequence NPFNKQSGPRQHEQGPGEEVPDVTPEEALPELPPGEPEFR. Residues 95-105 show a composition bias toward acidic residues; sequence EVPDVTPEEAL. 2 consecutive Phorbol-ester/DAG-type zinc fingers follow at residues 199 to 250 and 429 to 489; these read EHRF…SKPC and IHTL…STTC. Ser-501 bears the Phosphoserine mark.

The protein belongs to the DEF8 family. Interacts (via C-terminus) with PLEKHM1; this interaction is weak but increased in a RAB7A-dependent manner.

Functionally, positively regulates lysosome peripheral distribution and ruffled border formation in osteoclasts. Involved in bone resorption. The protein is Differentially expressed in FDCP 8 homolog (DEF8) of Homo sapiens (Human).